The chain runs to 174 residues: MKILITGRPGVGKTTLIKKLSRLLQNAGGFYTEEMREDGKRIGFKIITLDGEEGILARTDLPSPYRVGKYYVNLKDLEEIGVRSLERAFQEKDLIIIDEIGKMELLSRKFREVVEKIFDSEKDVVATIKKSSDPFVEKIKNRNDVVIFELNEKNRNSLLNEILSVLKFNRGEKQ.

ATP-binding positions include 7 to 14 (GRPGVGKT) and 94 to 101 (LIIIDEIG).

It belongs to the THEP1 NTPase family.

It carries out the reaction a ribonucleoside 5'-triphosphate + H2O = a ribonucleoside 5'-diphosphate + phosphate + H(+). In terms of biological role, has nucleotide phosphatase activity towards ATP, GTP, CTP, TTP and UTP. May hydrolyze nucleoside diphosphates with lower efficiency. This chain is Nucleoside-triphosphatase THEP1, found in Thermotoga sp. (strain RQ2).